We begin with the raw amino-acid sequence, 1007 residues long: uncharacterized protein (1007 aa).

Positions 1 to 51 (MTTPISNSPSSIPTVTVSTTTASSGSLGTSTVSSTTTSTSVAQTATTTSSA) are cleaved as a signal peptide. Residues 1-96 (MTTPISNSPS…SATANKTSSA (96 aa)) are compositionally biased toward low complexity. 7 disordered regions span residues 1–186 (MTTP…GNPI), 200–224 (TYTT…MSLP), 387–533 (NWGS…GPDI), 543–562 (TVYP…ANQN), 578–645 (ETII…GPDI), 655–674 (TVYP…ANQN), and 712–757 (DLED…GPDI). A compositionally biased stretch (polar residues) spans 118 to 163 (DGEVSSNYDDVDTPTNSSDSTVDSDYQDVETQYKTISNNGENTYET). Over residues 167 to 176 (HGEKNTHVQE) the composition is skewed to basic and acidic residues. 2 stretches are compositionally biased toward polar residues: residues 177 to 186 (SHASGTGNPI) and 200 to 210 (TYTTSPRNENI). The segment covering 423–442 (VINVNVNVGGTNVNIGDTNV) has biased composition (low complexity). The segment covering 443–453 (SKGSGTPTSSQ) has biased composition (polar residues). The span at 469-491 (IDTNNQTNGDINTNDNSNNVDGS) shows a compositional bias: low complexity. Polar residues predominate over residues 507-523 (DTESTNGNDSGKTTSTE). Residues 597 to 618 (ADADVEDTSDTDSGIGDDDGVS) show a composition bias toward acidic residues. The span at 619 to 635 (DTESTNGNNSGKTTSTE) shows a compositional bias: low complexity. The span at 712 to 730 (DLEDVSDADSGFGDDDGIS) shows a compositional bias: acidic residues. Residues 732 to 743 (TESTNGNDSGKN) are compositionally biased toward polar residues.

It belongs to the chlamydial CPn_0572/CT_456/TC_0741 family.

This is an uncharacterized protein from Chlamydia muridarum (strain MoPn / Nigg).